A 264-amino-acid chain; its full sequence is Dehydrodolichyl diphosphate synthase complex subunit SPAC4D7.04c (264 aa).

This sequence belongs to the UPP synthase family. In terms of assembly, forms an active dehydrodolichyl diphosphate synthase complex with nus1. Mg(2+) is required as a cofactor.

The protein localises to the endoplasmic reticulum membrane. It carries out the reaction n isopentenyl diphosphate + (2E,6E)-farnesyl diphosphate = a di-trans,poly-cis-polyprenyl diphosphate + n diphosphate. Its pathway is protein modification; protein glycosylation. Its function is as follows. With nus1, forms the dehydrodolichyl diphosphate synthase (DDS) complex, an essential component of the dolichol monophosphate (Dol-P) biosynthetic machinery. Adds multiple copies of isopentenyl pyrophosphate (IPP) to farnesyl pyrophosphate (FPP) to produce dehydrodolichyl diphosphate (Dedol-PP), a precursor of dolichol which is utilized as a sugar carrier in protein glycosylation in the endoplasmic reticulum (ER). The chain is Dehydrodolichyl diphosphate synthase complex subunit SPAC4D7.04c from Schizosaccharomyces pombe (strain 972 / ATCC 24843) (Fission yeast).